A 247-amino-acid polypeptide reads, in one-letter code: MQSIFLPVLNPTTIDGQEITEEWIKKYGPTLRGKPVNIDHNYYSNGNLAVGDVVDVYFNPEGNLYAHIRIFDEIYWRLVDNGIKIKGVSFEFNDDGVGEEGIMKGLALCLESDPKVDFARLVEGNYVLEVLASIKRDSMDTKTQEKTEPKKIKDMTEEEFEKFLHEKIEQILASHKKENEDKDKSDNEDDKVVEILASKMDELVAVNKSVLKQLEEIRKAQKEILASAPVPPSGSGNSGHRRANLGL.

The segment at 225–247 (LASAPVPPSGSGNSGHRRANLGL) is disordered.

This is an uncharacterized protein from Methanocaldococcus jannaschii (strain ATCC 43067 / DSM 2661 / JAL-1 / JCM 10045 / NBRC 100440) (Methanococcus jannaschii).